A 367-amino-acid polypeptide reads, in one-letter code: Alginate lyase (367 aa).

Residues 1 to 24 form the signal peptide; it reads MTIINRKTAPALLALALFGGAAQA. Substrate is bound by residues 63 to 64, 136 to 137, and Y254; these read SK and HT.

The protein belongs to the polysaccharide lyase 5 family.

It localises to the periplasm. The enzyme catalyses Eliminative cleavage of alginate to give oligosaccharides with 4-deoxy-alpha-L-erythro-hex-4-enuronosyl groups at their non-reducing ends and beta-D-mannuronate at their reducing end.. Its function is as follows. Catalyzes the depolymerization of alginate by cleaving the beta-1,4 glycosidic bond between two adjacent sugar residues via a beta-elimination mechanism. May serve to degrade mislocalized alginate that is trapped in the periplasmic space. This Pseudomonas entomophila (strain L48) protein is Alginate lyase.